We begin with the raw amino-acid sequence, 161 residues long: UPF0262 protein Rru_A2770 (161 aa).

The protein belongs to the UPF0262 family.

This chain is UPF0262 protein Rru_A2770, found in Rhodospirillum rubrum (strain ATCC 11170 / ATH 1.1.1 / DSM 467 / LMG 4362 / NCIMB 8255 / S1).